A 466-amino-acid polypeptide reads, in one-letter code: Uronate isomerase (466 aa).

This sequence belongs to the metallo-dependent hydrolases superfamily. Uronate isomerase family.

The catalysed reaction is D-glucuronate = D-fructuronate. It carries out the reaction aldehydo-D-galacturonate = keto-D-tagaturonate. Its pathway is carbohydrate metabolism; pentose and glucuronate interconversion. This is Uronate isomerase from Brucella canis (strain ATCC 23365 / NCTC 10854 / RM-666).